The chain runs to 1448 residues: Protein clueless (1448 aa).

Disordered regions lie at residues 1–96 (MALE…HAEK), 110–129 (NANV…ADGD), and 265–286 (RTRP…VSDP). 2 stretches are compositionally biased toward low complexity: residues 9 to 26 (NSNA…TKAS) and 41 to 66 (NLNP…ADGP). Residues 68-77 (AKKKGKKNRN) are compositionally biased toward basic residues. The segment covering 78–88 (KSPTEPTTEAV) has biased composition (polar residues). Phosphoserine is present on Ser270. The Clu domain maps to 424–666 (RAEDAFSSKL…RTFPPDVNFL (243 aa)). Disordered regions lie at residues 726–773 (SEKS…SGEA), 958–1010 (AVSS…SASD), and 1414–1448 (GEAE…ATSS). Residues 748–769 (GAEKPDDKEKKNEEEEKKERST) show a composition bias toward basic and acidic residues. Over residues 966-981 (KKRGNGGKHNKHKSSK) the composition is skewed to basic residues. A compositionally biased stretch (low complexity) spans 986–1007 (QQQQQTTGNQNGSSSGSSNSSS). The span at 1419 to 1429 (AVSKDIKEQPE) shows a compositional bias: basic and acidic residues.

Belongs to the CLU family.

Its subcellular location is the cytoplasm. Its function is as follows. mRNA-binding protein involved in proper cytoplasmic distribution of mitochondria. The protein is Protein clueless of Drosophila melanogaster (Fruit fly).